The following is a 333-amino-acid chain: Glyceraldehyde-3-phosphate dehydrogenase (333 aa).

Residues 11-12, aspartate 33, arginine 78, and serine 120 contribute to the NAD(+) site; that span reads RI. Residues 149-151, threonine 180, 209-210, and arginine 232 contribute to the D-glyceraldehyde 3-phosphate site; these read SCT and TG. Cysteine 150 acts as the Nucleophile in catalysis. At cysteine 150 the chain carries S-nitrosocysteine. Asparagine 314 contacts NAD(+).

Belongs to the glyceraldehyde-3-phosphate dehydrogenase family. Homotetramer. Post-translationally, S-nitrosylation of Cys-150 leads to translocation to the nucleus.

The protein resides in the cytoplasm. It is found in the cytosol. The protein localises to the cytoskeleton. Its subcellular location is the nucleus. The enzyme catalyses D-glyceraldehyde 3-phosphate + phosphate + NAD(+) = (2R)-3-phospho-glyceroyl phosphate + NADH + H(+). It catalyses the reaction S-nitroso-L-cysteinyl-[GAPDH] + L-cysteinyl-[protein] = L-cysteinyl-[GAPDH] + S-nitroso-L-cysteinyl-[protein]. Its pathway is carbohydrate degradation; glycolysis; pyruvate from D-glyceraldehyde 3-phosphate: step 1/5. Has both glyceraldehyde-3-phosphate dehydrogenase and nitrosylase activities, thereby playing a role in glycolysis and nuclear functions, respectively. Glyceraldehyde-3-phosphate dehydrogenase is a key enzyme in glycolysis that catalyzes the first step of the pathway by converting D-glyceraldehyde 3-phosphate (G3P) into 3-phospho-D-glyceroyl phosphate. Participates in nuclear events including transcription, RNA transport, DNA replication and apoptosis. Nuclear functions are probably due to the nitrosylase activity that mediates cysteine S-nitrosylation of nuclear target proteins such as SIRT1, HDAC2 and PRKDC. This Danio rerio (Zebrafish) protein is Glyceraldehyde-3-phosphate dehydrogenase.